Here is a 114-residue protein sequence, read N- to C-terminus: Large ribosomal subunit protein uL22 (114 aa).

It belongs to the universal ribosomal protein uL22 family. As to quaternary structure, part of the 50S ribosomal subunit.

In terms of biological role, this protein binds specifically to 23S rRNA; its binding is stimulated by other ribosomal proteins, e.g. L4, L17, and L20. It is important during the early stages of 50S assembly. It makes multiple contacts with different domains of the 23S rRNA in the assembled 50S subunit and ribosome. The globular domain of the protein is located near the polypeptide exit tunnel on the outside of the subunit, while an extended beta-hairpin is found that lines the wall of the exit tunnel in the center of the 70S ribosome. The polypeptide is Large ribosomal subunit protein uL22 (Streptococcus mutans serotype c (strain ATCC 700610 / UA159)).